We begin with the raw amino-acid sequence, 477 residues long: MDIISSYSPIHVVGGGLAGSEAAWQIASAGVPVILHEMRGVRGTDAHKTDGLAELVCSNSFRSDDATSNAVGVIHAEMRMAGSLIMAAADRHQVPAGGALAVDRDGFSDAVTRAIHDHPLITVMREEITGLPPSDWDLAIVATGPLTAPSLAAAIQAETGEDSLAFFDAIAPIVYRESIDMDICWYQSRYDKVGPGGTGKDYINCPMDEAQYNAFVNALIAGDTVGFKEWEGTPYFDGCLPIEVMAERGRETLRHGPMKPMGLTNAHNPTVKAYAVVQLRQDNALGTLYNMVGFQTKLKYGAQAEIFRMIPGLENAEFARLGGLHRNTYINSPTLLDPSLTLKSRPGLRFAGQITGCEGYVESASVGLMAGRFAAAERKGEAISLPPATTALGSLLGHITGGHIVTDEEPGKRSFQPMNINFGLFPELEPGSIVKPEGVKRFRGKDKTIMKRQLIARRALADCAAWLGQTRTLAERA.

Residue 14–19 (GGGLAG) participates in FAD binding.

Belongs to the MnmG family. TrmFO subfamily. FAD is required as a cofactor.

It is found in the cytoplasm. It carries out the reaction uridine(54) in tRNA + (6R)-5,10-methylene-5,6,7,8-tetrahydrofolate + NADH + H(+) = 5-methyluridine(54) in tRNA + (6S)-5,6,7,8-tetrahydrofolate + NAD(+). It catalyses the reaction uridine(54) in tRNA + (6R)-5,10-methylene-5,6,7,8-tetrahydrofolate + NADPH + H(+) = 5-methyluridine(54) in tRNA + (6S)-5,6,7,8-tetrahydrofolate + NADP(+). In terms of biological role, catalyzes the folate-dependent formation of 5-methyl-uridine at position 54 (M-5-U54) in all tRNAs. The polypeptide is Methylenetetrahydrofolate--tRNA-(uracil-5-)-methyltransferase TrmFO (Rhizobium etli (strain ATCC 51251 / DSM 11541 / JCM 21823 / NBRC 15573 / CFN 42)).